The following is a 513-amino-acid chain: Fructose import ATP-binding protein FruK (513 aa).

2 consecutive ABC transporter domains span residues 8 to 244 and 262 to 505; these read VVMK…IGKS and PGEK…IANT. Position 40-47 (40-47) interacts with ATP; it reads GENGAGKS.

The protein belongs to the ABC transporter superfamily. As to quaternary structure, the complex is composed of an ATP-binding protein (FruK), two transmembrane proteins (FruF and FruG) and a solute-binding protein (FruE).

Its subcellular location is the cell membrane. The catalysed reaction is D-fructose(out) + ATP + H2O = D-fructose(in) + ADP + phosphate + H(+). Part of the high-affinity ABC transporter complex FruEKFG involved in fructose uptake. Can also transport ribose and xylose, with lower affinity. Probably responsible for energy coupling to the transport system. The sequence is that of Fructose import ATP-binding protein FruK from Bifidobacterium longum (strain NCC 2705).